We begin with the raw amino-acid sequence, 129 residues long: Small ribosomal subunit protein uS11 (129 aa).

This sequence belongs to the universal ribosomal protein uS11 family. In terms of assembly, part of the 30S ribosomal subunit. Interacts with proteins S7 and S18. Binds to IF-3.

Its function is as follows. Located on the platform of the 30S subunit, it bridges several disparate RNA helices of the 16S rRNA. Forms part of the Shine-Dalgarno cleft in the 70S ribosome. The chain is Small ribosomal subunit protein uS11 from Marinobacter nauticus (strain ATCC 700491 / DSM 11845 / VT8) (Marinobacter aquaeolei).